Reading from the N-terminus, the 538-residue chain is CTP synthase (538 aa).

The interval Met1–Leu267 is amidoligase domain. Position 15 (Ser15) interacts with CTP. Ser15 serves as a coordination point for UTP. Residues Ser16 to Ile21 and Asp73 contribute to the ATP site. Residues Asp73 and Glu141 each contribute to the Mg(2+) site. CTP-binding positions include Asp148–Glu150, Lys188–Gln193, and Lys224. Residues Lys188–Gln193 and Lys224 each bind UTP. The 247-residue stretch at Lys292–Ser538 folds into the Glutamine amidotransferase type-1 domain. Gly351 contacts L-glutamine. Cys378 functions as the Nucleophile; for glutamine hydrolysis in the catalytic mechanism. L-glutamine is bound by residues Leu379 to Gln382, Glu402, and Arg469. Catalysis depends on residues His513 and Glu515.

It belongs to the CTP synthase family. In terms of assembly, homotetramer.

It catalyses the reaction UTP + L-glutamine + ATP + H2O = CTP + L-glutamate + ADP + phosphate + 2 H(+). The catalysed reaction is L-glutamine + H2O = L-glutamate + NH4(+). The enzyme catalyses UTP + NH4(+) + ATP = CTP + ADP + phosphate + 2 H(+). The protein operates within pyrimidine metabolism; CTP biosynthesis via de novo pathway; CTP from UDP: step 2/2. Its activity is regulated as follows. Allosterically activated by GTP, when glutamine is the substrate; GTP has no effect on the reaction when ammonia is the substrate. The allosteric effector GTP functions by stabilizing the protein conformation that binds the tetrahedral intermediate(s) formed during glutamine hydrolysis. Inhibited by the product CTP, via allosteric rather than competitive inhibition. In terms of biological role, catalyzes the ATP-dependent amination of UTP to CTP with either L-glutamine or ammonia as the source of nitrogen. Regulates intracellular CTP levels through interactions with the four ribonucleotide triphosphates. The protein is CTP synthase of Helicobacter pylori (strain ATCC 700392 / 26695) (Campylobacter pylori).